We begin with the raw amino-acid sequence, 170 residues long: Lipoprotein signal peptidase (170 aa).

3 helical membrane-spanning segments follow: residues phenylalanine 9–valine 29, isoleucine 72–glutamate 92, and isoleucine 96–arginine 118. Active-site residues include aspartate 124 and aspartate 146. A helical transmembrane segment spans residues asparagine 143 to isoleucine 163.

The protein belongs to the peptidase A8 family.

Its subcellular location is the cell inner membrane. The catalysed reaction is Release of signal peptides from bacterial membrane prolipoproteins. Hydrolyzes -Xaa-Yaa-Zaa-|-(S,diacylglyceryl)Cys-, in which Xaa is hydrophobic (preferably Leu), and Yaa (Ala or Ser) and Zaa (Gly or Ala) have small, neutral side chains.. Its pathway is protein modification; lipoprotein biosynthesis (signal peptide cleavage). Its function is as follows. This protein specifically catalyzes the removal of signal peptides from prolipoproteins. This chain is Lipoprotein signal peptidase, found in Borreliella afzelii (strain PKo) (Borrelia afzelii).